A 152-amino-acid polypeptide reads, in one-letter code: Probable flagellum biosynthesis repressor protein FlbT (152 aa).

This sequence belongs to the FlbT family.

Functionally, has a post-transcriptional repressor function in flagellum biogenesis. Associates with the 5'-UTR of fljK mRNA and promotes its degradation. The polypeptide is Probable flagellum biosynthesis repressor protein FlbT (Brucella anthropi (strain ATCC 49188 / DSM 6882 / CCUG 24695 / JCM 21032 / LMG 3331 / NBRC 15819 / NCTC 12168 / Alc 37) (Ochrobactrum anthropi)).